The following is a 365-amino-acid chain: Chorismate synthase (365 aa).

Residues R48 and R54 each coordinate NADP(+). Residues 131-133 (RSS), 243-244 (NA), G288, 303-307 (KPTSS), and R329 each bind FMN.

It belongs to the chorismate synthase family. Homotetramer. The cofactor is FMNH2.

The enzyme catalyses 5-O-(1-carboxyvinyl)-3-phosphoshikimate = chorismate + phosphate. It functions in the pathway metabolic intermediate biosynthesis; chorismate biosynthesis; chorismate from D-erythrose 4-phosphate and phosphoenolpyruvate: step 7/7. Functionally, catalyzes the anti-1,4-elimination of the C-3 phosphate and the C-6 proR hydrogen from 5-enolpyruvylshikimate-3-phosphate (EPSP) to yield chorismate, which is the branch point compound that serves as the starting substrate for the three terminal pathways of aromatic amino acid biosynthesis. This reaction introduces a second double bond into the aromatic ring system. This Agrobacterium fabrum (strain C58 / ATCC 33970) (Agrobacterium tumefaciens (strain C58)) protein is Chorismate synthase.